The primary structure comprises 420 residues: Pre-mRNA-splicing factor RBM22 (420 aa).

At alanine 2 the chain carries N-acetylalanine. A phosphoserine mark is found at serine 4 and serine 102. Glycyl lysine isopeptide (Lys-Gly) (interchain with G-Cter in SUMO2) cross-links involve residues lysine 139 and lysine 149. A C3H1-type zinc finger spans residues 159-186 (RNRPHICSFWVKGECKRGEECPYRHEKP). N6-acetyllysine is present on lysine 212. Positions 232–305 (TTLYVGGLGD…RRLNVKWGRS (74 aa)) constitute an RRM domain. A Glycyl lysine isopeptide (Lys-Gly) (interchain with G-Cter in SUMO2) cross-link involves residue lysine 290. Disordered stretches follow at residues 303-343 (GRSQ…AAEE) and 372-420 (APPP…HSSP). Basic and acidic residues predominate over residues 309 to 318 (RGKEKEKDGT).

Belongs to the SLT11 family. Component of the pre-catalytic and catalytic spliceosome complexes. Component of the postcatalytic spliceosome P complex. Interacts with PDCD6; the interaction induces translocation of PDCD6 in the cytoplasm. Interacts with PPIL1.

Its subcellular location is the nucleus. The protein resides in the cytoplasm. In terms of biological role, required for pre-mRNA splicing as component of the activated spliceosome. Involved in the first step of pre-mRNA splicing. Binds directly to the internal stem-loop (ISL) domain of the U6 snRNA and to the pre-mRNA intron near the 5' splice site during the activation and catalytic phases of the spliceosome cycle. Involved in both translocations of the nuclear SLU7 to the cytoplasm and the cytosolic calcium-binding protein PDCD6 to the nucleus upon cellular stress responses. The polypeptide is Pre-mRNA-splicing factor RBM22 (RBM22) (Bos taurus (Bovine)).